The following is a 124-amino-acid chain: Mitochondrial zinc maintenance protein 1, mitochondrial (124 aa).

This sequence belongs to the complex I LYR family. MZM1 subfamily. In terms of assembly, interacts with RIP1.

It localises to the mitochondrion matrix. In terms of biological role, assembly factor required for Rieske Fe-S protein RIP1 incorporation into the cytochrome b-c1 (CIII) complex. Functions as a chaperone, binding to this subunit within the mitochondrial matrix and stabilizing it prior to its translocation and insertion into the late CIII dimeric intermediate within the mitochondrial inner membrane. Modulates the mitochondrial matrix zinc pool. This is Mitochondrial zinc maintenance protein 1, mitochondrial (MZM1) from Paracoccidioides lutzii (strain ATCC MYA-826 / Pb01) (Paracoccidioides brasiliensis).